Here is a 324-residue protein sequence, read N- to C-terminus: Acetaldehyde dehydrogenase 1 (324 aa).

NAD(+) is bound at residue 18 to 21; the sequence is SGNI. Catalysis depends on Cys136, which acts as the Acyl-thioester intermediate. NAD(+)-binding positions include 167-175 and Asn297; that span reads SAGPGTRAN.

Belongs to the acetaldehyde dehydrogenase family.

It catalyses the reaction acetaldehyde + NAD(+) + CoA = acetyl-CoA + NADH + H(+). The polypeptide is Acetaldehyde dehydrogenase 1 (Parafrankia sp. (strain EAN1pec)).